Here is a 125-residue protein sequence, read N- to C-terminus: Large ribosomal subunit protein uL22 (125 aa).

It belongs to the universal ribosomal protein uL22 family. Part of the 50S ribosomal subunit.

Functionally, this protein binds specifically to 23S rRNA; its binding is stimulated by other ribosomal proteins, e.g. L4, L17, and L20. It is important during the early stages of 50S assembly. It makes multiple contacts with different domains of the 23S rRNA in the assembled 50S subunit and ribosome. Its function is as follows. The globular domain of the protein is located near the polypeptide exit tunnel on the outside of the subunit, while an extended beta-hairpin is found that lines the wall of the exit tunnel in the center of the 70S ribosome. The chain is Large ribosomal subunit protein uL22 from Thermobifida fusca (strain YX).